A 398-amino-acid polypeptide reads, in one-letter code: Carbamoyl phosphate synthase small chain (398 aa).

A CPSase region spans residues 1–199 (MTPAWATEKP…WNEGFGEQAE (199 aa)). Residues serine 54, glycine 251, and glycine 253 each contribute to the L-glutamine site. One can recognise a Glutamine amidotransferase type-1 domain in the interval 203-391 (HVVAIDYGVK…VNLIREKRGE (189 aa)). Catalysis depends on cysteine 280, which acts as the Nucleophile. Residues leucine 281, glutamine 284, asparagine 322, glycine 324, and phenylalanine 325 each contribute to the L-glutamine site. Catalysis depends on residues histidine 364 and glutamate 366.

Belongs to the CarA family. As to quaternary structure, composed of two chains; the small (or glutamine) chain promotes the hydrolysis of glutamine to ammonia, which is used by the large (or ammonia) chain to synthesize carbamoyl phosphate. Tetramer of heterodimers (alpha,beta)4.

It carries out the reaction hydrogencarbonate + L-glutamine + 2 ATP + H2O = carbamoyl phosphate + L-glutamate + 2 ADP + phosphate + 2 H(+). It catalyses the reaction L-glutamine + H2O = L-glutamate + NH4(+). Its pathway is amino-acid biosynthesis; L-arginine biosynthesis; carbamoyl phosphate from bicarbonate: step 1/1. It functions in the pathway pyrimidine metabolism; UMP biosynthesis via de novo pathway; (S)-dihydroorotate from bicarbonate: step 1/3. Functionally, small subunit of the glutamine-dependent carbamoyl phosphate synthetase (CPSase). CPSase catalyzes the formation of carbamoyl phosphate from the ammonia moiety of glutamine, carbonate, and phosphate donated by ATP, constituting the first step of 2 biosynthetic pathways, one leading to arginine and/or urea and the other to pyrimidine nucleotides. The small subunit (glutamine amidotransferase) binds and cleaves glutamine to supply the large subunit with the substrate ammonia. The protein is Carbamoyl phosphate synthase small chain of Mesorhizobium japonicum (strain LMG 29417 / CECT 9101 / MAFF 303099) (Mesorhizobium loti (strain MAFF 303099)).